We begin with the raw amino-acid sequence, 171 residues long: bZIP transcription factor 2 (171 aa).

Over residues 1–24 (MASSSSTYRSSSSSDGGNNNPSDS) the composition is skewed to low complexity. The disordered stretch occupies residues 1–54 (MASSSSTYRSSSSSDGGNNNPSDSVVTVDERKRKRMLSNRESARRSRMRKQKHV). In terms of domain architecture, bZIP spans 29-92 (DERKRKRMLS…MKIQAENSVL (64 aa)). Residues 31–52 (RKRKRMLSNRESARRSRMRKQK) form a basic motif region. A leucine-zipper region spans residues 57-71 (LTAQINQLSNDNRQI).

As to quaternary structure, forms heterodimers with BZIP9, BZIP10, BZIP25 and BZIP63. Component of a ternary complex composed of BZIP2-BZIP63 heterodimer and KIN10.

It is found in the nucleus. Transcription factor that binds to specific DNA sequences in target gene promoters. BZIP2-BZIP63-KIN10 complex binds to the ETFQO promoter to up-regulate its transcription. The sequence is that of bZIP transcription factor 2 from Arabidopsis thaliana (Mouse-ear cress).